Here is a 524-residue protein sequence, read N- to C-terminus: Secologanin synthase 1 (524 aa).

Topologically, residues 1–11 (MEMDMDTIRKA) are lumenal. The helical transmembrane segment at 12 to 32 (IAATIFALVMAWAWRVLDWAW) threads the bilayer. Over 33–524 (FTPKRIEKRL…SHVIYKKLES (492 aa)) the chain is Cytoplasmic. Cysteine 470 contributes to the heme binding site.

The protein belongs to the cytochrome P450 family. Requires heme as cofactor. In terms of tissue distribution, upper and lower leaf epidermis.

Its subcellular location is the endoplasmic reticulum membrane. The catalysed reaction is loganin + reduced [NADPH--hemoprotein reductase] + O2 = secologanin + oxidized [NADPH--hemoprotein reductase] + 2 H2O + H(+). The enzyme catalyses secologanin + reduced [NADPH--hemoprotein reductase] + O2 = secoxyloganin + oxidized [NADPH--hemoprotein reductase] + H2O + 2 H(+). It participates in alkaloid biosynthesis; secologanin biosynthesis. Functionally, component of the seco-iridoid and derivatives monoterpenoid indole alkaloids (MIAs, e.g. secologanin) biosynthesis pathway. Catalyzes the conversion of loganin into secologanin. Catalyzes the conversion of secologanin into secoxyloganin. In Catharanthus roseus (Madagascar periwinkle), this protein is Secologanin synthase 1.